Consider the following 229-residue polypeptide: 2-phytyl-1,4-naphtoquinone methyltransferase (229 aa).

The protein belongs to the class I-like SAM-binding methyltransferase superfamily. MenG/UbiE family.

The enzyme catalyses demethylphylloquinol + S-adenosyl-L-methionine = phylloquinol + S-adenosyl-L-homocysteine + H(+). The protein operates within cofactor biosynthesis; phylloquinone biosynthesis. Methyltransferase required for the conversion of 2-phytyl-1,4-beta-naphthoquinol to phylloquinol. In Nostoc sp. (strain PCC 7120 / SAG 25.82 / UTEX 2576), this protein is 2-phytyl-1,4-naphtoquinone methyltransferase.